The chain runs to 242 residues: Ribonuclease 3 (242 aa).

The region spanning 18 to 146 is the RNase III domain; sequence APAIEAKLGY…IIGAIYLDGG (129 aa). Glu59 serves as a coordination point for Mg(2+). Residue Asp63 is part of the active site. The Mg(2+) site is built by Asp132 and Glu135. Glu135 is a catalytic residue. Residues 172 to 241 form the DRBM domain; the sequence is NWKALLQDYC…AADALSRVEL (70 aa). Over residues 218 to 227 the composition is skewed to basic and acidic residues; sequence RGKGTSKKEA. Positions 218 to 242 are disordered; sequence RGKGTSKKEAQQAAAADALSRVELP.

This sequence belongs to the ribonuclease III family. Homodimer. Requires Mg(2+) as cofactor.

The protein localises to the cytoplasm. The catalysed reaction is Endonucleolytic cleavage to 5'-phosphomonoester.. Its function is as follows. Digests double-stranded RNA. Involved in the processing of primary rRNA transcript to yield the immediate precursors to the large and small rRNAs (23S and 16S). Processes some mRNAs, and tRNAs when they are encoded in the rRNA operon. Processes pre-crRNA and tracrRNA of type II CRISPR loci if present in the organism. The chain is Ribonuclease 3 from Protochlamydia amoebophila (strain UWE25).